Here is a 368-residue protein sequence, read N- to C-terminus: 2-aminoethylphosphonate--pyruvate transaminase (368 aa).

At Lys192 the chain carries N6-(pyridoxal phosphate)lysine.

It belongs to the class-V pyridoxal-phosphate-dependent aminotransferase family. PhnW subfamily. Homodimer. Pyridoxal 5'-phosphate is required as a cofactor.

It carries out the reaction (2-aminoethyl)phosphonate + pyruvate = phosphonoacetaldehyde + L-alanine. Its function is as follows. Involved in phosphonate degradation. The protein is 2-aminoethylphosphonate--pyruvate transaminase of Pseudomonas entomophila (strain L48).